The primary structure comprises 237 residues: GrpE protein homolog, mitochondrial (237 aa).

Belongs to the GrpE family. As to quaternary structure, probable component of the PAM complex at least composed of a mitochondrial HSP70 protein, GrpE, tim-44, tim-16 and tim-14/dnj-21.

Its subcellular location is the mitochondrion matrix. Essential component of the PAM complex, a complex required for the translocation of transit peptide-containing proteins from the inner membrane into the mitochondrial matrix in an ATP-dependent manner. Seems to control the nucleotide-dependent binding of mitochondrial HSP70 to substrate proteins. The polypeptide is GrpE protein homolog, mitochondrial (Caenorhabditis elegans).